The chain runs to 742 residues: NAD(P)H-quinone oxidoreductase subunit 5, chloroplastic (742 aa).

16 helical membrane passes run 9–29, 40–60, 89–109, 125–145, 147–167, 185–205, 219–239, 258–278, 283–303, 327–347, 354–374, 396–416, 425–445, 550–570, 606–626, and 722–742; these read WIIPFLPLPVPMLIGLGLLLF, WSFQSVLLLSIVMIFSMNLSI, IDPLTSIMLILITTVGIMVLI, FAYMSFFSTSMLGLVTSSNLI, IYIFWELVGICSYLLIGFWFT, GDFGLLLGILGFYWITGSFEF, NEVNFLFVTLCAILLFAGAIA, TPISALIHAATMVAAGIFLVA, LFIVIPHIMNFISLIGIITVF, LGYMMLALGMGSYRSALFHLI, ALLFLGSGSVIHSMETLVGYC, NSFLLGTLSLCGIPPLACFWS, WLYSPIFGIIAWSTAGLTAFY, LFPILILILFTLFVGFLGIPF, FFSVSIASFGIFIAFFLYKPV, and YLFFYFSYVAIFLLIYYFFNV.

It belongs to the complex I subunit 5 family. As to quaternary structure, NDH is composed of at least 16 different subunits, 5 of which are encoded in the nucleus.

The protein resides in the plastid. It is found in the chloroplast thylakoid membrane. It carries out the reaction a plastoquinone + NADH + (n+1) H(+)(in) = a plastoquinol + NAD(+) + n H(+)(out). It catalyses the reaction a plastoquinone + NADPH + (n+1) H(+)(in) = a plastoquinol + NADP(+) + n H(+)(out). NDH shuttles electrons from NAD(P)H:plastoquinone, via FMN and iron-sulfur (Fe-S) centers, to quinones in the photosynthetic chain and possibly in a chloroplast respiratory chain. The immediate electron acceptor for the enzyme in this species is believed to be plastoquinone. Couples the redox reaction to proton translocation, and thus conserves the redox energy in a proton gradient. The sequence is that of NAD(P)H-quinone oxidoreductase subunit 5, chloroplastic (ndhF) from Lactuca sativa (Garden lettuce).